A 135-amino-acid chain; its full sequence is Ribosome-binding factor A (135 aa).

It belongs to the RbfA family. In terms of assembly, monomer. Binds 30S ribosomal subunits, but not 50S ribosomal subunits or 70S ribosomes.

The protein localises to the cytoplasm. One of several proteins that assist in the late maturation steps of the functional core of the 30S ribosomal subunit. Associates with free 30S ribosomal subunits (but not with 30S subunits that are part of 70S ribosomes or polysomes). Required for efficient processing of 16S rRNA. May interact with the 5'-terminal helix region of 16S rRNA. The polypeptide is Ribosome-binding factor A (Bartonella henselae (strain ATCC 49882 / DSM 28221 / CCUG 30454 / Houston 1) (Rochalimaea henselae)).